A 65-amino-acid chain; its full sequence is Hirudin-2' (65 aa).

The interval 1 to 3 (ITY) is interaction with thrombin active site. 3 disulfide bridges follow: cysteine 6-cysteine 14, cysteine 16-cysteine 28, and cysteine 22-cysteine 39. The segment at 39–65 (CVTGEGTPKPQSHNDGDFEEIPEEYLQ) is disordered. O-linked (GalNAc...) threonine glycosylation is present at threonine 45. An interaction with fibrinogen-binding exosite of thrombin region spans residues 55–65 (DFEEIPEEYLQ). A compositionally biased stretch (acidic residues) spans 55-65 (DFEEIPEEYLQ). A Sulfotyrosine modification is found at tyrosine 63.

The protein belongs to the protease inhibitor I14 (hirudin) family.

The protein resides in the secreted. Its function is as follows. Hirudin is a potent thrombin-specific protease inhibitor. It forms a stable non-covalent complex with alpha-thrombin, thereby abolishing its ability to cleave fibrinogen. The chain is Hirudin-2' from Hirudo medicinalis (Medicinal leech).